A 612-amino-acid chain; its full sequence is Autophagy-related protein 28 (612 aa).

The tract at residues 44-72 (NHMEEQSPKFESSFPRRTSEGPVDDVGKS) is disordered. A coiled-coil region spans residues 214–296 (YQAKAQDKQA…QRTLKNECFQ (83 aa)).

Belongs to the ATG28 family. In terms of assembly, interacts with ATG35.

Its subcellular location is the cytoplasm. It is found in the vacuole membrane. The protein localises to the cytoplasmic vesicle membrane. In terms of biological role, required for the autophagic degradation of peroxisomes called pexophagy, but not essential for general autophagy. Involved in resistance to elevated pH. The polypeptide is Autophagy-related protein 28 (ATG28) (Komagataella phaffii (strain GS115 / ATCC 20864) (Yeast)).